Here is a 179-residue protein sequence, read N- to C-terminus: Molybdopterin synthase catalytic subunit (179 aa).

Over residues 1–10 (MTTSEDQTTP) the composition is skewed to polar residues. The interval 1-21 (MTTSEDQTTPAHLDPKTYPRH) is disordered. Residues 127–128 (HR), K143, and 150–152 (KRE) each bind substrate.

The protein belongs to the MoaE family. MOCS2B subfamily. As to quaternary structure, heterotetramer; composed of 2 small (MOCS2A) and 2 large (MOCS2B) subunits.

It localises to the cytoplasm. It carries out the reaction 2 [molybdopterin-synthase sulfur-carrier protein]-C-terminal-Gly-aminoethanethioate + cyclic pyranopterin phosphate + H2O = molybdopterin + 2 [molybdopterin-synthase sulfur-carrier protein]-C-terminal Gly-Gly + 2 H(+). The protein operates within cofactor biosynthesis; molybdopterin biosynthesis. Functionally, catalytic subunit of the molybdopterin synthase complex, a complex that catalyzes the conversion of precursor Z into molybdopterin. Acts by mediating the incorporation of 2 sulfur atoms from thiocarboxylated MOCS2A into precursor Z to generate a dithiolene group. This is Molybdopterin synthase catalytic subunit from Aspergillus oryzae (strain ATCC 42149 / RIB 40) (Yellow koji mold).